The primary structure comprises 362 residues: Chorismate synthase (362 aa).

An NADP(+)-binding site is contributed by R46. FMN is bound by residues 122 to 124 (RSS), 238 to 239 (NA), G278, 293 to 297 (KPTPS), and R319.

This sequence belongs to the chorismate synthase family. In terms of assembly, homotetramer. The cofactor is FMNH2.

It catalyses the reaction 5-O-(1-carboxyvinyl)-3-phosphoshikimate = chorismate + phosphate. Its pathway is metabolic intermediate biosynthesis; chorismate biosynthesis; chorismate from D-erythrose 4-phosphate and phosphoenolpyruvate: step 7/7. Catalyzes the anti-1,4-elimination of the C-3 phosphate and the C-6 proR hydrogen from 5-enolpyruvylshikimate-3-phosphate (EPSP) to yield chorismate, which is the branch point compound that serves as the starting substrate for the three terminal pathways of aromatic amino acid biosynthesis. This reaction introduces a second double bond into the aromatic ring system. The chain is Chorismate synthase from Campylobacter jejuni subsp. jejuni serotype O:6 (strain 81116 / NCTC 11828).